Consider the following 226-residue polypeptide: MKKLSKRMQAVTKLIDKNKLYPIQEAFELIKKTAITKFVSSVDIAVSLNLDTTKAEQQLRGAIAFPFSIGKSIRILAITDDEKKASEAGADFVGGLDKIEAIKNGWLDFDLIITSPKFMGALGKLGKLLGTRGLMPNPKTETVTDDVVSAIKAYKKGKKEYRTDSFGNIHLSLGKTDTKTEHLVANAMALIDLIKSKRPSTVKGTYIKNIALTTTMGPSLKVKLPD.

It belongs to the universal ribosomal protein uL1 family. In terms of assembly, part of the 50S ribosomal subunit.

In terms of biological role, binds directly to 23S rRNA. The L1 stalk is quite mobile in the ribosome, and is involved in E site tRNA release. Functionally, protein L1 is also a translational repressor protein, it controls the translation of the L11 operon by binding to its mRNA. The protein is Large ribosomal subunit protein uL1 of Mycoplasma genitalium (strain ATCC 33530 / DSM 19775 / NCTC 10195 / G37) (Mycoplasmoides genitalium).